The sequence spans 141 residues: Acetyltransferase YpeA (141 aa).

The 141-residue stretch at 1 to 141 folds into the N-acetyltransferase domain; that stretch reads MEIRVFRQED…GKRLIEDEEY (141 aa).

This sequence belongs to the acetyltransferase family. YpeA subfamily.

This Escherichia coli (strain K12) protein is Acetyltransferase YpeA (ypeA).